The following is a 311-amino-acid chain: Transcriptional repressor scratch 2 (311 aa).

The tract at residues 1–20 is SNAG domain; that stretch reads MPRSFLVKKIKADGFQCSGV. Disordered stretches follow at residues 71–90 and 120–156; these read PAYP…PQSS and RRRA…ATAG. The segment covering 124–146 has biased composition (gly residues); that stretch reads GAGGDAAGAGDAGGGGGGGGGGE. 4 C2H2-type zinc fingers span residues 161–183, 192–214, 218–240, and 246–268; these read HACA…KQTH, RKCP…VLTH, HKCG…MRSH, and FGCA…MQTH. Residues 274–297 form a C2H2-type 5; atypical zinc finger; that stretch reads YRCRQCDKSFALKSYLHKHCEAAC.

It belongs to the snail C2H2-type zinc-finger protein family.

It localises to the nucleus. Functionally, may be involved in transcriptional regulation. This chain is Transcriptional repressor scratch 2 (Scrt2), found in Mus musculus (Mouse).